The primary structure comprises 1470 residues: RNA-directed RNA polymerase VP1 (1470 aa).

Residues 28–55 (AKQDQKENETTSNNKDTSSSVPKPSNFR) are disordered. The span at 37-50 (TTSNNKDTSSSVPK) shows a compositional bias: polar residues.

The catalysed reaction is RNA(n) + a ribonucleoside 5'-triphosphate = RNA(n+1) + diphosphate. Functionally, RNA-directed RNA polymerase that is involved in transcription and genome replication. Following infection, it catalyzes the synthesis of fully conservative plus strands. After core assembly, which consists in recruitment of one capped plus-strand for each genomic segments and polymerase complexes, the polymerase switches mode and catalyzes the synthesis of complementary minus-strands. This Saccharum officinarum (Sugarcane) protein is RNA-directed RNA polymerase VP1 (S1).